The following is a 177-amino-acid chain: Large ribosomal subunit protein uL6 (177 aa).

This sequence belongs to the universal ribosomal protein uL6 family. As to quaternary structure, part of the 50S ribosomal subunit.

Functionally, this protein binds to the 23S rRNA, and is important in its secondary structure. It is located near the subunit interface in the base of the L7/L12 stalk, and near the tRNA binding site of the peptidyltransferase center. The protein is Large ribosomal subunit protein uL6 of Klebsiella pneumoniae (strain 342).